A 244-amino-acid polypeptide reads, in one-letter code: 5-oxoprolinase subunit A (244 aa).

Belongs to the LamB/PxpA family. In terms of assembly, forms a complex composed of PxpA, PxpB and PxpC.

It catalyses the reaction 5-oxo-L-proline + ATP + 2 H2O = L-glutamate + ADP + phosphate + H(+). Functionally, catalyzes the cleavage of 5-oxoproline to form L-glutamate coupled to the hydrolysis of ATP to ADP and inorganic phosphate. This chain is 5-oxoprolinase subunit A, found in Escherichia coli O157:H7.